Reading from the N-terminus, the 206-residue chain is Large ribosomal subunit protein uL4 (206 aa).

The segment at 44 to 80 is disordered; it reads KRAGTHSVKTRSTISGGGAKPWRQKGTGRARSGSNRS.

This sequence belongs to the universal ribosomal protein uL4 family. Part of the 50S ribosomal subunit.

One of the primary rRNA binding proteins, this protein initially binds near the 5'-end of the 23S rRNA. It is important during the early stages of 50S assembly. It makes multiple contacts with different domains of the 23S rRNA in the assembled 50S subunit and ribosome. Its function is as follows. Forms part of the polypeptide exit tunnel. This chain is Large ribosomal subunit protein uL4, found in Oleidesulfovibrio alaskensis (strain ATCC BAA-1058 / DSM 17464 / G20) (Desulfovibrio alaskensis).